The chain runs to 462 residues: Glutamate--tRNA ligase 1 (462 aa).

A 'HIGH' region motif is present at residues 8-18 (PSPTGYLHIGG). The 'KMSKS' region signature appears at 236 to 240 (KLSKR). Lys239 is a binding site for ATP.

It belongs to the class-I aminoacyl-tRNA synthetase family. Glutamate--tRNA ligase type 1 subfamily. As to quaternary structure, monomer.

Its subcellular location is the cytoplasm. The catalysed reaction is tRNA(Glu) + L-glutamate + ATP = L-glutamyl-tRNA(Glu) + AMP + diphosphate. Its function is as follows. Catalyzes the attachment of glutamate to tRNA(Glu) in a two-step reaction: glutamate is first activated by ATP to form Glu-AMP and then transferred to the acceptor end of tRNA(Glu). In Sulfurovum sp. (strain NBC37-1), this protein is Glutamate--tRNA ligase 1.